Reading from the N-terminus, the 423-residue chain is Kynureninase (423 aa).

Pyridoxal 5'-phosphate-binding positions include Leu-105, Ser-106, 133–136 (FPSD), Asp-218, His-221, and Tyr-243. An N6-(pyridoxal phosphate)lysine modification is found at Lys-244. Residues Trp-273 and Asn-301 each contribute to the pyridoxal 5'-phosphate site.

Belongs to the kynureninase family. As to quaternary structure, homodimer. It depends on pyridoxal 5'-phosphate as a cofactor.

It catalyses the reaction L-kynurenine + H2O = anthranilate + L-alanine + H(+). It carries out the reaction 3-hydroxy-L-kynurenine + H2O = 3-hydroxyanthranilate + L-alanine + H(+). The protein operates within amino-acid degradation; L-kynurenine degradation; L-alanine and anthranilate from L-kynurenine: step 1/1. Its pathway is cofactor biosynthesis; NAD(+) biosynthesis; quinolinate from L-kynurenine: step 2/3. Its function is as follows. Catalyzes the cleavage of L-kynurenine (L-Kyn) and L-3-hydroxykynurenine (L-3OHKyn) into anthranilic acid (AA) and 3-hydroxyanthranilic acid (3-OHAA), respectively. The polypeptide is Kynureninase (Xanthomonas euvesicatoria pv. vesicatoria (strain 85-10) (Xanthomonas campestris pv. vesicatoria)).